The sequence spans 189 residues: Elongation factor P (189 aa).

Lysine 35 is modified (N6-(3,6-diaminohexanoyl)-5-hydroxylysine).

This sequence belongs to the elongation factor P family. May be beta-lysylated on the epsilon-amino group of Lys-35 by the combined action of EpmA and EpmB, and then hydroxylated on the C5 position of the same residue by EpmC (if this protein is present). Lysylation is critical for the stimulatory effect of EF-P on peptide-bond formation. The lysylation moiety may extend toward the peptidyltransferase center and stabilize the terminal 3-CCA end of the tRNA. Hydroxylation of the C5 position on Lys-35 may allow additional potential stabilizing hydrogen-bond interactions with the P-tRNA.

It is found in the cytoplasm. It participates in protein biosynthesis; polypeptide chain elongation. Involved in peptide bond synthesis. Alleviates ribosome stalling that occurs when 3 or more consecutive Pro residues or the sequence PPG is present in a protein, possibly by augmenting the peptidyl transferase activity of the ribosome. Modification of Lys-35 is required for alleviation. The chain is Elongation factor P from Wigglesworthia glossinidia brevipalpis.